The sequence spans 287 residues: ATP synthase gamma chain (287 aa).

This sequence belongs to the ATPase gamma chain family. F-type ATPases have 2 components, CF(1) - the catalytic core - and CF(0) - the membrane proton channel. CF(1) has five subunits: alpha(3), beta(3), gamma(1), delta(1), epsilon(1). CF(0) has three main subunits: a, b and c.

Its subcellular location is the cell inner membrane. Functionally, produces ATP from ADP in the presence of a proton gradient across the membrane. The gamma chain is believed to be important in regulating ATPase activity and the flow of protons through the CF(0) complex. This Ectopseudomonas mendocina (strain ymp) (Pseudomonas mendocina) protein is ATP synthase gamma chain.